We begin with the raw amino-acid sequence, 386 residues long: Patatin group M-2 (386 aa).

An N-terminal signal peptide occupies residues 1–23 (MATTKSFLILFFMILATTSSTCA). The PNPLA domain maps to 32-229 (LSIDGGGIKG…TVGDPALLSL (198 aa)). Positions 36–41 (GGGIKG) match the GXGXXG motif. A GXSXG motif is present at residues 75–79 (GTSTG). The active-site Nucleophile is the Ser-77. N-linked (GlcNAc...) asparagine glycosylation is present at Asn-115. Asp-215 acts as the Proton acceptor in catalysis. The short motif at 215-217 (DGG) is the DGA/G element. Positions 321-384 (ENALTGTTTE…DRKKLRANKA (64 aa)) form a coiled coil.

Belongs to the patatin family. In terms of tissue distribution, tuber.

It localises to the vacuole. Probable lipolytic acyl hydrolase (LAH), an activity which is thought to be involved in the response of tubers to pathogens. The chain is Patatin group M-2 from Solanum tuberosum (Potato).